Consider the following 215-residue polypeptide: Transmembrane protein 267 (215 aa).

The next 3 helical transmembrane spans lie at 77–97 (FGEVLLAGFLASVIDVDHFFQ), 114–134 (FLHCSTVIPIAVLSVKLAVHL), and 178–198 (SSFYVISTLSLPHLCSFLMYL).

The protein localises to the membrane. In Mus musculus (Mouse), this protein is Transmembrane protein 267.